The chain runs to 313 residues: Porphobilinogen deaminase (313 aa).

At Cys249 the chain carries S-(dipyrrolylmethanemethyl)cysteine.

The protein belongs to the HMBS family. In terms of assembly, monomer. Dipyrromethane is required as a cofactor.

It carries out the reaction 4 porphobilinogen + H2O = hydroxymethylbilane + 4 NH4(+). Its pathway is porphyrin-containing compound metabolism; protoporphyrin-IX biosynthesis; coproporphyrinogen-III from 5-aminolevulinate: step 2/4. In terms of biological role, tetrapolymerization of the monopyrrole PBG into the hydroxymethylbilane pre-uroporphyrinogen in several discrete steps. The polypeptide is Porphobilinogen deaminase (Paracoccus denitrificans (strain Pd 1222)).